The sequence spans 71 residues: Alpha-cobratoxin (71 aa).

5 cysteine pairs are disulfide-bonded: cysteine 3-cysteine 20, cysteine 14-cysteine 41, cysteine 26-cysteine 30, cysteine 45-cysteine 56, and cysteine 57-cysteine 62.

Belongs to the three-finger toxin family. Long-chain subfamily. Type II alpha-neurotoxin sub-subfamily. As to quaternary structure, monomer, homo- or heterodimer with cytotoxins 1 (P60305), 2 (AC P01445), and 3 (AC P01446); disulfide-linked. In homodimer alpha-cobratoxin, selective reduction of Cys(26)-Cys(30) in one subunit does not affect the activity against the alpha-7/CHRNA7 nAChR, whereas its reduction in both subunits almost prevents alpha-7/CHRNA7 nAChR recognition. On the contrary, reduction of one or both Cys(26)-Cys(30) disulfide bonds in the homodimer considerably potentiates inhibition of the alpha-3-beta-2/CHRNA3-CHRNB2 nAChR by the toxin. As to expression, expressed by the venom gland.

It is found in the secreted. Functionally, monomer: binds with high affinity to muscular (alpha-1-beta-1-gamma-delta/CHRNA1-CHRNB1-CHRNG-CHRND) nAChR (tested on Torpedo californica, Kd=0.2-4.5 nM) and neuronal alpha-7/CHRNA7 nicotinic acetylcholine receptors (Kd=13-105 nM). Also inhibits GABA(A) channels. Heteropentamer targets studied are composed of alpha-1-beta-3-gamma-2 (GABRA1-GABRB3-GABRG2) subunits (IC(50)=236 nM), alpha-1-beta-2-gamma-2 (GABRA1-GABRB2-GABRG2) subunits (IC(50)=469 nM), alpha-2-beta-2-gamma-2 (GABRA2-GABRB2-GABRG2) subunits (IC(50)=485 nM), alpha-5-beta-3-gamma-2 (GABRA5-GABRB3-GABRG2) subunits (IC(50)=635 nM), and alpha-2-beta-3-gamma-2 (GABRA2-GABRB3-GABRG2) subunits (IC(50)=1099 nM) (activated by 10 uM GABA). Homodimer: binds with high affinity (but lower than the monomeric form) to muscular (IC(50)=9.7 nM) and with low affinity to neuronal alpha-7/CHRNA7 nAChRs (IC(50)=1370 nM). However, it acquires (compared to the monomeric form) the capacity to block alpha-3/beta-2 (CHRNA3/CHRNB2) nAChRs. Its function is as follows. Heterodimer with cytotoxin 3 (AC P01446): is slightly more active than the homodimer in inhibiting alpha-7/CHRNA7 nAChR and is considerably more active in blocking the alpha-3-beta-2/CHRNA3-CHRNB2 nAChR. The sequence is that of Alpha-cobratoxin from Naja kaouthia (Monocled cobra).